We begin with the raw amino-acid sequence, 273 residues long: Trypsin-6 (273 aa).

The first 22 residues, 1 to 22 (MLSKFTAILLAVHIALFACALT), serve as a signal peptide directing secretion. Positions 23 to 46 (QAEKRHKLTRPAFHPNAPYLAGKR) are cleaved as a propeptide — activation peptide. The Peptidase S1 domain occupies 47 to 272 (IVGGFVIDIS…VRDWIRETSG (226 aa)). The cysteines at positions 72 and 88 are disulfide-linked. Active-site charge relay system residues include His87 and Asp132. Disulfide bonds link Cys197/Cys213 and Cys224/Cys248. The active-site Charge relay system is Ser228.

The protein belongs to the peptidase S1 family. Expressed in the midgut. Expression levels drop a few hours after blood feeding and pick up again 28 hours later.

The protein localises to the secreted. The enzyme catalyses Preferential cleavage: Arg-|-Xaa, Lys-|-Xaa.. In terms of biological role, constitutive trypsin that is expressed 2 days after emergence, coinciding with host seeking behavior of the female. The protein is Trypsin-6 (TRYP6) of Anopheles gambiae (African malaria mosquito).